We begin with the raw amino-acid sequence, 497 residues long: Sperm motility kinase Z (497 aa).

Positions 28 to 275 (YTVLKTLSQH…AQDLLSHPWL (248 aa)) constitute a Protein kinase domain. ATP-binding positions include 34–42 (LSQHGTTEV) and K57. D146 serves as the catalytic Proton acceptor. The UBA domain occupies 292–332 (FPDPDIMAAMKNIGFHVQDIRESLKHRKFDETMATYNLLRA). Disordered regions lie at residues 383-410 (TEEHQLRQTGGTNAPFPPKKTPTMGRSQ) and 439-460 (SSQAEKTSSDPEKSETSTSCPL).

Belongs to the protein kinase superfamily. CAMK Ser/Thr protein kinase family. Smok subfamily.

The enzyme catalyses L-seryl-[protein] + ATP = O-phospho-L-seryl-[protein] + ADP + H(+). It catalyses the reaction L-threonyl-[protein] + ATP = O-phospho-L-threonyl-[protein] + ADP + H(+). Functionally, may play a role in sperm motility, especially in the regulation of flagellar function. The protein is Sperm motility kinase Z (Gm4922) of Mus musculus (Mouse).